The sequence spans 155 residues: Ribosome maturation factor RimP (155 aa).

The protein belongs to the RimP family.

It localises to the cytoplasm. Required for maturation of 30S ribosomal subunits. In Gloeothece citriformis (strain PCC 7424) (Cyanothece sp. (strain PCC 7424)), this protein is Ribosome maturation factor RimP.